Reading from the N-terminus, the 288-residue chain is ATP synthase subunit a (288 aa).

6 helical membrane passes run 47–67 (LDSM…FWMV), 104–124 (LIAP…LMDL), 157–177 (DPNI…FYSI), 199–219 (PIVQ…TLIA), 237–257 (LIFI…SVPW), and 258–278 (AIFH…LTIV).

Belongs to the ATPase A chain family. As to quaternary structure, F-type ATPases have 2 components, CF(1) - the catalytic core - and CF(0) - the membrane proton channel. CF(1) has five subunits: alpha(3), beta(3), gamma(1), delta(1), epsilon(1). CF(0) has three main subunits: a(1), b(2) and c(9-12). The alpha and beta chains form an alternating ring which encloses part of the gamma chain. CF(1) is attached to CF(0) by a central stalk formed by the gamma and epsilon chains, while a peripheral stalk is formed by the delta and b chains.

The protein localises to the cell inner membrane. Its function is as follows. Key component of the proton channel; it plays a direct role in the translocation of protons across the membrane. The protein is ATP synthase subunit a of Psychrobacter cryohalolentis (strain ATCC BAA-1226 / DSM 17306 / VKM B-2378 / K5).